A 116-amino-acid polypeptide reads, in one-letter code: C-C motif chemokine 6 (116 aa).

The signal sequence occupies residues 1–21; it reads MRNSKTAISFFILVAVLGSQA. Disulfide bonds link Cys50-Cys73, Cys51-Cys89, and Cys60-Cys100.

It belongs to the intercrine beta (chemokine CC) family. The N-terminal is proteolytically cleaved by proteases associated with inflammatory responses. The processed forms CL6(22-95) and CCL6(23-95) show increase in CCR1-mediated signaling and chemotaxis assays in vitro. Expressed in myelopoietic bone marrow cultures stimulated by GM-CSF.

The protein resides in the secreted. Functionally, chemotactic factor that attracts mostly macrophage, but it can also attract B cells, CD4(+) lymphocytes and eosinophils. The sequence is that of C-C motif chemokine 6 (Ccl6) from Mus musculus (Mouse).